The sequence spans 139 residues: MKIMATGVFDILHPGHIHYLSESKKLGDYLIVIIATDKTAGSHGKKLIFNEEQRRFMVSQLRMVDEAIIGHEDDIFKTVYEVRPDIITLGYDQHFNDSEIEKKCRDLGLNTRVVRISKYDGEIKSSSDIRRRIIELYNR.

ATP contacts are provided by residues 8–9, 13–16, D92, and Y119; these read VF and HPGH.

The protein belongs to the archaeal FAD synthase family. In terms of assembly, homodimer. It depends on a divalent metal cation as a cofactor.

The catalysed reaction is FMN + ATP + H(+) = FAD + diphosphate. Its pathway is cofactor biosynthesis; FAD biosynthesis; FAD from FMN: step 1/1. Its function is as follows. Catalyzes the transfer of the AMP portion of ATP to flavin mononucleotide (FMN) to produce flavin adenine dinucleotide (FAD) coenzyme. This chain is FAD synthase, found in Picrophilus torridus (strain ATCC 700027 / DSM 9790 / JCM 10055 / NBRC 100828 / KAW 2/3).